The sequence spans 88 residues: Arminin 1a (88 aa).

Residues 1–18 (MKTVLAFLFLPFIAFTHA) form the signal peptide. Positions 19-57 (ESYEDVKEEIKNEAEKEIFEDLEEESDALDSSVREFNDA) are excised as a propeptide. Residue Val85 is modified to Valine amide.

This sequence belongs to the arminin family. Expressed in entodermal epithelium along the body column.

The protein localises to the secreted. The protein resides in the target cell membrane. Functionally, antimicrobial peptide with a broad-spectrum antimicrobial activity. Shows very strong bactericidal activity against B.megaterium (MBC=0.1 uM), E.coli (MBC=0.2 uM), S.aureus (MBC=0.4 uM), methicillin-resistant S.aureus (MRSA) (MBC=0.4-0.8 uM), vancomycin-resistant enterococci (VRE) (E.faecalis (MBC=1.6 uM), and E.faecium (MBC=0.4-0.8 uM)), and extended-spectrum beta-lactamase (ESBL)-producing enterobacteriaceae strains (K.pneumoniae (MBC=0.4-0.8 uM), E.coli (MBC=0.2-0.4 uM)). Keeps its antibacterial activity under a wide range of salt concentrations that mimic physiological conditions of human blood, which is surprising, since Hydra is an obligate freshwater animal with nearly no salt tolerance. Does not affect red blood cells. This Hydra vulgaris (Hydra) protein is Arminin 1a.